A 244-amino-acid chain; its full sequence is Mast cell protease 2 (244 aa).

The signal sequence occupies residues 1–18 (MQALLFLMALLLPSGAGA). Positions 19 to 20 (EE) are cleaved as a propeptide — activation peptide. Residues 21–242 (IIGGVEAKPH…YLPWIYKVLK (222 aa)) form the Peptidase S1 domain. A glycan (N-linked (GlcNAc...) asparagine) is linked at asparagine 44. An intrachain disulfide couples cysteine 50 to cysteine 66. Residues histidine 65 and aspartate 109 each act as charge relay system in the active site. 2 cysteine pairs are disulfide-bonded: cysteine 143/cysteine 208 and cysteine 174/cysteine 187. Catalysis depends on serine 202, which acts as the Charge relay system.

This sequence belongs to the peptidase S1 family. Granzyme subfamily. In terms of tissue distribution, mucosal mast cells.

The polypeptide is Mast cell protease 2 (Mcpt2) (Mus musculus (Mouse)).